Consider the following 368-residue polypeptide: 3-dehydroquinate synthase (368 aa).

Residues 112–116 (GVIGD), 136–137 (TT), K149, and K158 each bind NAD(+). Residues E191, H256, and H273 each coordinate Zn(2+).

Belongs to the sugar phosphate cyclases superfamily. Dehydroquinate synthase family. It depends on Co(2+) as a cofactor. Zn(2+) serves as cofactor. The cofactor is NAD(+).

Its subcellular location is the cytoplasm. It catalyses the reaction 7-phospho-2-dehydro-3-deoxy-D-arabino-heptonate = 3-dehydroquinate + phosphate. The protein operates within metabolic intermediate biosynthesis; chorismate biosynthesis; chorismate from D-erythrose 4-phosphate and phosphoenolpyruvate: step 2/7. Catalyzes the conversion of 3-deoxy-D-arabino-heptulosonate 7-phosphate (DAHP) to dehydroquinate (DHQ). This is 3-dehydroquinate synthase from Prochlorococcus marinus (strain NATL1A).